Here is a 75-residue protein sequence, read N- to C-terminus: Rugosin-LK2 (75 aa).

Positions methionine 1–glycine 24 are cleaved as a signal peptide. The propeptide occupies glutamate 25–glutamate 40.

As to expression, expressed by the skin glands.

Its subcellular location is the secreted. In terms of biological role, has antimicrobial activity against Gram-positive bacteria S.aureus ATCC 2592 (MIC=10.0 uM), S.aureus ATCC 43300 (MIC=10.0 uM) and B.subtilis (MIC=30.0 uM), against Gram-negative bacteria E.coli ML-35P (MIC=10.0 uM), P.aeruginosa PA01 (MIC=2.5 uM) and P.aeruginosa ATCC 27853 (MIC=2.5 uM) and against fungus C.albicans ATCC 2002 (MIC=10.0 uM). The sequence is that of Rugosin-LK2 from Limnonectes kuhlii (Kuhl's Creek frog).